The primary structure comprises 58 residues: Large ribosomal subunit protein uL30 (58 aa).

The protein belongs to the universal ribosomal protein uL30 family. In terms of assembly, part of the 50S ribosomal subunit.

This is Large ribosomal subunit protein uL30 from Pseudomonas entomophila (strain L48).